The primary structure comprises 228 residues: Cytochrome c oxidase subunit 2 (228 aa).

The Mitochondrial intermembrane segment spans residues M1–H26. Residues T27–N48 traverse the membrane as a helical segment. At K49 to E62 the chain is on the mitochondrial matrix side. A helical transmembrane segment spans residues I63–R82. Residues L83–N228 are Mitochondrial intermembrane-facing. 6 residues coordinate Cu cation: H161, C196, E198, C200, H204, and M207. E198 contributes to the Mg(2+) binding site.

It belongs to the cytochrome c oxidase subunit 2 family. As to quaternary structure, component of the cytochrome c oxidase (complex IV, CIV), a multisubunit enzyme composed of a catalytic core of 3 subunits and several supernumerary subunits. The complex exists as a monomer or a dimer and forms supercomplexes (SCs) in the inner mitochondrial membrane with ubiquinol-cytochrome c oxidoreductase (cytochrome b-c1 complex, complex III, CIII). The cofactor is Cu cation.

It is found in the mitochondrion inner membrane. It catalyses the reaction 4 Fe(II)-[cytochrome c] + O2 + 8 H(+)(in) = 4 Fe(III)-[cytochrome c] + 2 H2O + 4 H(+)(out). Component of the cytochrome c oxidase, the last enzyme in the mitochondrial electron transport chain which drives oxidative phosphorylation. The respiratory chain contains 3 multisubunit complexes succinate dehydrogenase (complex II, CII), ubiquinol-cytochrome c oxidoreductase (cytochrome b-c1 complex, complex III, CIII) and cytochrome c oxidase (complex IV, CIV), that cooperate to transfer electrons derived from NADH and succinate to molecular oxygen, creating an electrochemical gradient over the inner membrane that drives transmembrane transport and the ATP synthase. Cytochrome c oxidase is the component of the respiratory chain that catalyzes the reduction of oxygen to water. Electrons originating from reduced cytochrome c in the intermembrane space (IMS) are transferred via the dinuclear copper A center (CU(A)) of subunit 2 and heme A of subunit 1 to the active site in subunit 1, a binuclear center (BNC) formed by heme A3 and copper B (CU(B)). The BNC reduces molecular oxygen to 2 water molecules using 4 electrons from cytochrome c in the IMS and 4 protons from the mitochondrial matrix. This Anopheles gambiae (African malaria mosquito) protein is Cytochrome c oxidase subunit 2 (COII).